We begin with the raw amino-acid sequence, 229 residues long: Homeobox-leucine zipper protein HOX3 (229 aa).

A disordered region spans residues 1 to 82 (MMGATSPSGL…GPHRPKKLRL (82 aa)). Acidic residues predominate over residues 52-68 (GEEEEFPMGSVEEDEEE). The homeobox DNA-binding region spans 75–134 (HRPKKLRLSKEQSRLLEESFRLNHTLTPKQKEALAIKLKLRPRQVEVWFQNRRARTKLKQ). Residues 133-177 (KQTEMECEYLKRCFGSLTEENRRLQREVEELRAMRVAPPTVLSPH) form a leucine-zipper region. The tract at residues 198–229 (AATGPPAVRPPPSSAAAAAPSPFHPRRPSAAF) is disordered.

This sequence belongs to the HD-ZIP homeobox family. Class II subfamily. Homodimer. May form a heterodimer with HOX1, HOX2 or HOX7. In terms of tissue distribution, expressed in seedlings, roots, leaves, nodes, internodes, flowers and embryo.

The protein localises to the nucleus. Probable transcription repressor that binds to the DNA sequence 5'-CAAT[GC]ATTG-3'. The sequence is that of Homeobox-leucine zipper protein HOX3 (HOX3) from Oryza sativa subsp. indica (Rice).